We begin with the raw amino-acid sequence, 66 residues long: Large ribosomal subunit protein bL33c (66 aa).

It belongs to the bacterial ribosomal protein bL33 family.

The protein localises to the plastid. It is found in the chloroplast. The protein is Large ribosomal subunit protein bL33c of Cycas taitungensis (Prince sago).